We begin with the raw amino-acid sequence, 78 residues long: RNA-binding protein Hfq (78 aa).

One can recognise a Sm domain in the interval 10-69; sequence DPFLNALRREHVPVSIYLVNGIKLQGQVESFDQYVVLLKNTVTQMVYKHAISTVVPARPV.

The protein belongs to the Hfq family. In terms of assembly, homohexamer.

RNA chaperone that binds small regulatory RNA (sRNAs) and mRNAs to facilitate mRNA translational regulation in response to envelope stress, environmental stress and changes in metabolite concentrations. Also binds with high specificity to tRNAs. The chain is RNA-binding protein Hfq from Dechloromonas aromatica (strain RCB).